Reading from the N-terminus, the 324-residue chain is Transcription factor TCP24 (324 aa).

Positions 50–108 (GKDRHSKVLTSKGLRDRRIRLSVATAIQFYDLQDRLGFDQPSKAVEWLINAASDSITDL) constitute a TCP domain. Disordered stretches follow at residues 122–215 (QNQT…PMNH) and 261–297 (QRSSISSSSSSSSPMDSQSISFFMATPPPLDHHNHQL). A compositionally biased stretch (low complexity) spans 127 to 142 (SACSSGTSESSLLSLS). A R domain is found at 144-162 (TEIRGKARERARERTAKDR). Basic and acidic residues predominate over residues 144 to 167 (TEIRGKARERARERTAKDRDKDLQ). Polar residues-rich tracts occupy residues 168-192 (NAHSSFTQLLTGGFDQQPSNRNWTG) and 200-212 (VQLQIPNSSSQEP). Low complexity predominate over residues 261–281 (QRSSISSSSSSSSPMDSQSIS).

Forms a heterodimeric complex with ABAP1. Interacts with SPL. As to expression, expressed in cotyledons, particularly in the vascular region, in leaves, roots, stems, buds, flowers and siliques.

It is found in the nucleus. In terms of biological role, plays a pivotal role in the control of morphogenesis of shoot organs by negatively regulating the expression of boundary-specific genes such as CUC genes, probably through the induction of miRNA (e.g. miR164). In association with ABAP1, exerts a negative role in cell proliferation in leaves, possibly by inhibiting mitotic DNA replication. Participates in ovule development. This is Transcription factor TCP24 (TCP24) from Arabidopsis thaliana (Mouse-ear cress).